The chain runs to 496 residues: Probable malate:quinone oxidoreductase (496 aa).

This sequence belongs to the MQO family. It depends on FAD as a cofactor.

It carries out the reaction (S)-malate + a quinone = a quinol + oxaloacetate. It participates in carbohydrate metabolism; tricarboxylic acid cycle; oxaloacetate from (S)-malate (quinone route): step 1/1. This chain is Probable malate:quinone oxidoreductase, found in Prochlorococcus marinus (strain NATL2A).